The chain runs to 696 residues: Elongation factor G (696 aa).

The tr-type G domain occupies 8-288 (EDYRNFGIMA…AVVDFLPSPI (281 aa)). GTP is bound by residues 17 to 24 (AHIDAGKT), 86 to 90 (DTPGH), and 140 to 143 (NKMD).

This sequence belongs to the TRAFAC class translation factor GTPase superfamily. Classic translation factor GTPase family. EF-G/EF-2 subfamily.

It localises to the cytoplasm. Functionally, catalyzes the GTP-dependent ribosomal translocation step during translation elongation. During this step, the ribosome changes from the pre-translocational (PRE) to the post-translocational (POST) state as the newly formed A-site-bound peptidyl-tRNA and P-site-bound deacylated tRNA move to the P and E sites, respectively. Catalyzes the coordinated movement of the two tRNA molecules, the mRNA and conformational changes in the ribosome. The polypeptide is Elongation factor G (Chelativorans sp. (strain BNC1)).